The primary structure comprises 532 residues: Phosphoenolpyruvate carboxykinase (ATP) (532 aa).

Residues Arg60, Tyr194, and Lys200 each contribute to the substrate site. ATP-binding positions include Lys200, His219, and 237–245 (GLSGTGKTT). The Mn(2+) site is built by Lys200 and His219. Asp258 contacts Mn(2+). Glu286, Arg324, and Thr449 together coordinate ATP. Arg324 lines the substrate pocket.

Belongs to the phosphoenolpyruvate carboxykinase (ATP) family. Requires Mn(2+) as cofactor.

Its subcellular location is the cytoplasm. It catalyses the reaction oxaloacetate + ATP = phosphoenolpyruvate + ADP + CO2. It participates in carbohydrate biosynthesis; gluconeogenesis. Its function is as follows. Involved in the gluconeogenesis. Catalyzes the conversion of oxaloacetate (OAA) to phosphoenolpyruvate (PEP) through direct phosphoryl transfer between the nucleoside triphosphate and OAA. This Roseobacter denitrificans (strain ATCC 33942 / OCh 114) (Erythrobacter sp. (strain OCh 114)) protein is Phosphoenolpyruvate carboxykinase (ATP).